The following is a 511-amino-acid chain: MDTAVEANLGAAGHGPRTELSDEDYYPQGSWDTVFLVALLLLGLPANGLMAWLAGSQARHGAGTRLALLLLSLALSDFLFLAAATFQILEIQHGGHWPLGTAACRFYYFLWGVSYSSGLFLLTALSLDRCLLALCPRWYPGHRPARLPLWVCAGVWVLATLFSVPWLVFPEAAVWWYDLVICLDFWDTEELPLRMLEILGGFLPFLLLLVCHVLTQATACRTCCGHQPRRMACHGFARVAKTILSAYVVLRLPYQLAQLLYLAFLWDVYPGYLLWEALVYSDYLILLNSCLSPFLCLAASADLRALLRTVLSSFAAAVCEERPGSFIPAEPQTLPGPTSEGQSRLDSVVQPQVNPSVQLQSDSVVQPEVSPSAQPQSDSVAQPTVGSLIQPPLDTVVQLEVNPLTQPQLDPMAQPQVNPSAQPQSKSVVQPQVDPLTQPQLDPVAQPQSNTETPIPAFGDESASNPGEENSSGPCPDPTPGTPENLDRPAVPQEKSPSNVPPEEAPSAGPT.

The segment at 1–20 (MDTAVEANLGAAGHGPRTEL) is disordered. Over 1–33 (MDTAVEANLGAAGHGPRTELSDEDYYPQGSWDT) the chain is Extracellular. The helical transmembrane segment at 34-54 (VFLVALLLLGLPANGLMAWLA) threads the bilayer. Residues 55 to 65 (GSQARHGAGTR) are Cytoplasmic-facing. A helical transmembrane segment spans residues 66–86 (LALLLLSLALSDFLFLAAATF). Residues 87–105 (QILEIQHGGHWPLGTAACR) lie on the Extracellular side of the membrane. Cysteines 104 and 182 form a disulfide. Residues 106 to 126 (FYYFLWGVSYSSGLFLLTALS) form a helical membrane-spanning segment. The Cytoplasmic portion of the chain corresponds to 127–148 (LDRCLLALCPRWYPGHRPARLP). Residues 149–169 (LWVCAGVWVLATLFSVPWLVF) traverse the membrane as a helical segment. Topologically, residues 170-194 (PEAAVWWYDLVICLDFWDTEELPLR) are extracellular. Residues 195-215 (MLEILGGFLPFLLLLVCHVLT) traverse the membrane as a helical segment. Residues 216 to 258 (QATACRTCCGHQPRRMACHGFARVAKTILSAYVVLRLPYQLAQ) lie on the Cytoplasmic side of the membrane. Residues 259–279 (LLYLAFLWDVYPGYLLWEALV) form a helical membrane-spanning segment. The Extracellular segment spans residues 280 to 282 (YSD). Residues 283–303 (YLILLNSCLSPFLCLAASADL) traverse the membrane as a helical segment. At 304–511 (RALLRTVLSS…PEEAPSAGPT (208 aa)) the chain is on the cytoplasmic side. Disordered stretches follow at residues 328–349 (PAEP…DSVV), 361–386 (SDSV…PTVG), and 407–511 (PQLD…AGPT). Composition is skewed to polar residues over residues 335 to 345 (PGPTSEGQSRL) and 369 to 386 (VSPS…PTVG). Positions 419–433 (PSAQPQSKSVVQPQV) are enriched in low complexity. Composition is skewed to polar residues over residues 435-453 (PLTQ…NTET) and 462-473 (SASNPGEENSSG).

This sequence belongs to the G-protein coupled receptor 1 family.

The protein localises to the cell membrane. Functionally, orphan receptor. This chain is Probable G-protein coupled receptor 152 (Gpr152), found in Mus musculus (Mouse).